A 1178-amino-acid polypeptide reads, in one-letter code: Tricalbin-2 (1178 aa).

Residues 1 to 17 (MSPNSSKTRTDQISSMP) are compositionally biased toward polar residues. A disordered region spans residues 1–27 (MSPNSSKTRTDQISSMPGINEATKVES). At 1–98 (MSPNSSKTRT…NLLPDKFYGD (98 aa)) the chain is on the cytoplasmic side. A helical transmembrane segment spans residues 99-119 (WYHEVAILIIAGLCSFVLGYF). Residue lysine 120 is a topological domain, extracellular. The helical transmembrane segment at 121–141 (FSLASVLIVMLTTGMLYRTSS) threads the bilayer. Residues 142–1178 (KKYRESLRDL…TGDKKSEEKQ (1037 aa)) lie on the Cytoplasmic side of the membrane. The SMP-LTD domain maps to 164-367 (DYESVEWLNT…PPFSLQLNIP (204 aa)). 3 consecutive C2 domains span residues 358–481 (PPFS…EKVH), 504–628 (PKKL…LKVT), and 632–749 (RPVD…DKYT). Residues 784–821 (LSLEEAKEVDEINEKKDKLEKQKSTLDDKNISKEEKER) adopt a coiled-coil conformation. One can recognise a C2 4 domain in the interval 962–1086 (QVSWFPVTAT…DPESDTTFNI (125 aa)). At serine 991 the chain carries Phosphoserine.

The protein belongs to the tricalbin family. In terms of assembly, interacts with TCB1 and TCB3 via its C-terminal domain.

The protein localises to the cell membrane. Its subcellular location is the endoplasmic reticulum membrane. May play a role in membrane trafficking. This Saccharomyces cerevisiae (strain ATCC 204508 / S288c) (Baker's yeast) protein is Tricalbin-2 (TCB2).